The chain runs to 314 residues: 4-hydroxy-3-methylbut-2-enyl diphosphate reductase (314 aa).

Cysteine 12 contacts [4Fe-4S] cluster. (2E)-4-hydroxy-3-methylbut-2-enyl diphosphate is bound by residues histidine 43 and histidine 81. The dimethylallyl diphosphate site is built by histidine 43 and histidine 81. Isopentenyl diphosphate is bound by residues histidine 43 and histidine 81. Cysteine 103 lines the [4Fe-4S] cluster pocket. Histidine 131 contributes to the (2E)-4-hydroxy-3-methylbut-2-enyl diphosphate binding site. Histidine 131 provides a ligand contact to dimethylallyl diphosphate. An isopentenyl diphosphate-binding site is contributed by histidine 131. Residue glutamate 133 is the Proton donor of the active site. Threonine 170 serves as a coordination point for (2E)-4-hydroxy-3-methylbut-2-enyl diphosphate. Residue cysteine 198 participates in [4Fe-4S] cluster binding. (2E)-4-hydroxy-3-methylbut-2-enyl diphosphate contacts are provided by serine 226, asparagine 228, and serine 271. Dimethylallyl diphosphate contacts are provided by serine 226, asparagine 228, and serine 271. The isopentenyl diphosphate site is built by serine 226, asparagine 228, and serine 271.

This sequence belongs to the IspH family. It depends on [4Fe-4S] cluster as a cofactor.

It carries out the reaction isopentenyl diphosphate + 2 oxidized [2Fe-2S]-[ferredoxin] + H2O = (2E)-4-hydroxy-3-methylbut-2-enyl diphosphate + 2 reduced [2Fe-2S]-[ferredoxin] + 2 H(+). The enzyme catalyses dimethylallyl diphosphate + 2 oxidized [2Fe-2S]-[ferredoxin] + H2O = (2E)-4-hydroxy-3-methylbut-2-enyl diphosphate + 2 reduced [2Fe-2S]-[ferredoxin] + 2 H(+). Its pathway is isoprenoid biosynthesis; dimethylallyl diphosphate biosynthesis; dimethylallyl diphosphate from (2E)-4-hydroxy-3-methylbutenyl diphosphate: step 1/1. It functions in the pathway isoprenoid biosynthesis; isopentenyl diphosphate biosynthesis via DXP pathway; isopentenyl diphosphate from 1-deoxy-D-xylulose 5-phosphate: step 6/6. Functionally, catalyzes the conversion of 1-hydroxy-2-methyl-2-(E)-butenyl 4-diphosphate (HMBPP) into a mixture of isopentenyl diphosphate (IPP) and dimethylallyl diphosphate (DMAPP). Acts in the terminal step of the DOXP/MEP pathway for isoprenoid precursor biosynthesis. The protein is 4-hydroxy-3-methylbut-2-enyl diphosphate reductase of Bacillus velezensis (strain DSM 23117 / BGSC 10A6 / LMG 26770 / FZB42) (Bacillus amyloliquefaciens subsp. plantarum).